Reading from the N-terminus, the 363-residue chain is Elongation factor Tu, chloroplastic (363 aa).

In terms of domain architecture, tr-type G spans 1–189 (TLTAAITMAL…NVDEYIPTPE (189 aa)). GTP-binding positions include 55-59 (DCPGH) and 110-113 (NKED).

It belongs to the TRAFAC class translation factor GTPase superfamily. Classic translation factor GTPase family. EF-Tu/EF-1A subfamily.

The protein localises to the plastid. It localises to the chloroplast. It carries out the reaction GTP + H2O = GDP + phosphate + H(+). Its function is as follows. GTP hydrolase that promotes the GTP-dependent binding of aminoacyl-tRNA to the A-site of ribosomes during protein biosynthesis. The polypeptide is Elongation factor Tu, chloroplastic (tufA) (Gymnochlora stellata).